A 170-amino-acid polypeptide reads, in one-letter code: Cytochrome b6-f complex subunit 4 (170 aa).

Transmembrane regions (helical) follow at residues 46-66, 105-125, and 141-161; these read LLFM…GLSV, LLGI…PFIE, and TVFL…TLPL.

The protein belongs to the cytochrome b family. PetD subfamily. The 4 large subunits of the cytochrome b6-f complex are cytochrome b6, subunit IV (17 kDa polypeptide, PetD), cytochrome f and the Rieske protein, while the 4 small subunits are PetG, PetL, PetM and PetN. The complex functions as a dimer.

The protein resides in the cellular thylakoid membrane. Component of the cytochrome b6-f complex, which mediates electron transfer between photosystem II (PSII) and photosystem I (PSI), cyclic electron flow around PSI, and state transitions. In Synechococcus sp. (strain JA-2-3B'a(2-13)) (Cyanobacteria bacterium Yellowstone B-Prime), this protein is Cytochrome b6-f complex subunit 4.